The chain runs to 894 residues: Transcriptional activator/repressor GIS1 (894 aa).

The 42-residue stretch at 12 to 53 folds into the JmjN domain; sequence VPVFKPSMMEFANFQYFIDEITKFGIENGIVKVIPPKEWLEL. The residue at position 70 (serine 70) is a Phosphoserine. Residues 90-110 are a coiled coil; it reads ENEYDNKSYNLTQWKNLAESL. The region spanning 170-324 is the JmjC domain; that stretch reads PYDLTLWNLN…VRKQPLKCGC (155 aa). The Bipartite nuclear localization signal motif lies at 316–332; it reads RKQPLKCGCGNKKEERK. Residues 324–355 form a disordered region; it reads CGNKKEERKSGPFSNLSYDSNESEQRGSITDN. Polar residues predominate over residues 335-354; it reads PFSNLSYDSNESEQRGSITD. At serine 343 the chain carries Phosphoserine. Residues 361-385 adopt a coiled-coil conformation; it reads QKVRSFDELLNHSSQELQNLEDNKN. The segment covering 521–554 has biased composition (low complexity); it reads NISSTNNSANNSSSNNNVSTVPSSMMHSSTLNGT. Residues 521 to 558 are disordered; it reads NISSTNNSANNSSSNNNVSTVPSSMMHSSTLNGTSGLG. 5 positions are modified to phosphoserine: serine 690, serine 694, serine 696, serine 734, and serine 747. Residues 756-768 are compositionally biased toward low complexity; it reads LNGNDNSNLDSNN. Positions 756 to 810 are disordered; it reads LNGNDNSNLDSNNFDYSFTGNKQESNPSILNNNTNNNDNYRTSSMNNNGNNYQAH. Polar residues-rich tracts occupy residues 769-785 and 795-810; these read FDYS…PSIL and YRTS…YQAH. The C2H2-type 1 zinc finger occupies 828-851; it reads YICRECNRQFSSGHHLTRHKKSVH. The C2H2-type 2; atypical zinc-finger motif lies at 857 to 882; the sequence is HSCPRCGKRFKRRDHVLQHLNKKIPC.

The protein localises to the nucleus. Its function is as follows. Transcription factor involved in the regulation of gene expression upon nutrient starvation. Recognizes and binds to the post-diauxic-shift element 5'-T[AT]AGGGAT-3' in the promoter region. Can act as a transcriptional activator (e.g. of stress genes like SSA3, HSP12 and HSP26) as well as a repressor (e.g. of pyrophosphate phosphatase DPP1). GIS1 also acts as a DNA damage-responsive transcriptional repressor of photolyase PHR1. The sequence is that of Transcriptional activator/repressor GIS1 (GIS1) from Saccharomyces cerevisiae (strain ATCC 204508 / S288c) (Baker's yeast).